Reading from the N-terminus, the 566-residue chain is Lamin-1 (566 aa).

Positions 1-37 are disordered; that stretch reads MSSRKGTRSSRIVTLERSANSSLSNNGGGDDSFGSTL. At serine 2 the chain carries N-acetylserine. Residues 13 to 47 form a head region; sequence VTLERSANSSLSNNGGGDDSFGSTLLETSRLQEKD. The IF rod domain maps to 45–387; sequence EKDHLTSLNS…ALLEGEEERL (343 aa). The segment at 48–82 is coil 1A; it reads HLTSLNSRLATYIDKVRQLEQENNRLQVQIRDIEV. The interval 83 to 94 is linker 1; sequence VEKKEKSNLADR. A coil 1B region spans residues 95-228; sequence FEAEKARLRR…AFALQQHKGE (134 aa). The segment at 229–256 is linker 2; that stretch reads LEEVRHKRQVDMTTYAKQINDEYQSKLQ. Positions 257–385 are coil 2; the sequence is DQIEEMRAQF…YQALLEGEEE (129 aa). The tract at residues 386-566 is tail; it reads RLNLTQEAPQ…SDPADRCSIM (181 aa). The LTD domain maps to 435 to 550; it reads RRSKLNKETV…DTVSSITVEF (116 aa). The segment at 528–566 is disordered; sequence GDNPSARLEDSEGDTVSSITVEFSESSDPSDPADRCSIM. The span at 541-556 shows a compositional bias: polar residues; it reads DTVSSITVEFSESSDP. At cysteine 563 the chain carries Cysteine methyl ester. Cysteine 563 is lipidated: S-farnesyl cysteine. The propeptide at 564–566 is removed in mature form; it reads SIM.

It belongs to the intermediate filament family. As to quaternary structure, interacts with LEM domain proteins lem-2 and emr-1. May interact with unc-84; this interaction may be required to complete the connection between the nuclear lamina and the cytoskeleton. Ubiquitous. Expressed in all cells, except in cells undergoing spermatogenesis.

It is found in the nucleus envelope. Its subcellular location is the nucleus inner membrane. Its function is as follows. Major component of the nuclear lamina, a fibrous layer on the nucleoplasmic side of the inner nuclear membrane. Provides a framework for the nuclear envelope and probably also interacts with chromatin. Essential to maintain the shape and integrity of the nucleus, and for DNA replication. Involved in spatial organization of nuclear pore complexes. It is not a target for ced-3 during apoptosis, suggesting that lamin cleavage is not essential for apoptosis in C.elegans. The sequence is that of Lamin-1 from Caenorhabditis elegans.